We begin with the raw amino-acid sequence, 145 residues long: D-aminoacyl-tRNA deacylase (145 aa).

Positions G137–P138 match the Gly-cisPro motif, important for rejection of L-amino acids motif.

This sequence belongs to the DTD family. Homodimer.

Its subcellular location is the cytoplasm. The enzyme catalyses glycyl-tRNA(Ala) + H2O = tRNA(Ala) + glycine + H(+). It carries out the reaction a D-aminoacyl-tRNA + H2O = a tRNA + a D-alpha-amino acid + H(+). An aminoacyl-tRNA editing enzyme that deacylates mischarged D-aminoacyl-tRNAs. Also deacylates mischarged glycyl-tRNA(Ala), protecting cells against glycine mischarging by AlaRS. Acts via tRNA-based rather than protein-based catalysis; rejects L-amino acids rather than detecting D-amino acids in the active site. By recycling D-aminoacyl-tRNA to D-amino acids and free tRNA molecules, this enzyme counteracts the toxicity associated with the formation of D-aminoacyl-tRNA entities in vivo and helps enforce protein L-homochirality. The protein is D-aminoacyl-tRNA deacylase of Photorhabdus laumondii subsp. laumondii (strain DSM 15139 / CIP 105565 / TT01) (Photorhabdus luminescens subsp. laumondii).